The sequence spans 256 residues: Nuclear shuttle protein (256 aa).

Residues 21 to 42 (YQGFRRTAIVTRHDGKRRQHQS) carry the Bipartite nuclear localization signal motif. The short motif at 81 to 96 (QLGKIEPNRCRSYIKL) is the Nuclear localization signal element. Residues 150–187 (ELFGARINSHGNLAVMPSLKDRFYIRHLLKRVLSVDKD) are interaction with Arabidopsis thaliana NSI protein.

This sequence belongs to the begomovirus nuclear shuttle protein family. As to quaternary structure, binds to single-stranded and double-stranded viral DNA. Interacts with the host nuclear shuttle interacting (NSI) protein. This interaction may allow NSP to recruit NSI monomers to the viral genome and thus regulate nuclear export of viral genome by NSP.

The protein localises to the host nucleus. It localises to the host cytoplasm. The protein resides in the host cell membrane. Binds to the genomic viral ssDNA, shuttles it into and out of the cell nucleus. Begomoviruses use 2 proteins to transport their DNA from cell to cell. The nuclear shuttle protein (NSP) shuttles it between nucleus and cytoplasm and the movement protein (MP) probably transports the DNA-NSP complex to the cell periphery and facilitates movement across the cell wall. The chain is Nuclear shuttle protein from Macroptilium lathyroides (Lima bean).